Here is a 362-residue protein sequence, read N- to C-terminus: Phosphoserine aminotransferase (362 aa).

Arg43 provides a ligand contact to L-glutamate. Residues 77-78 (AR), Trp103, Thr153, Asp173, and Gln196 each bind pyridoxal 5'-phosphate. Lys197 carries the N6-(pyridoxal phosphate)lysine modification.

Belongs to the class-V pyridoxal-phosphate-dependent aminotransferase family. SerC subfamily. Homodimer. Pyridoxal 5'-phosphate serves as cofactor.

It localises to the cytoplasm. It carries out the reaction O-phospho-L-serine + 2-oxoglutarate = 3-phosphooxypyruvate + L-glutamate. The enzyme catalyses 4-(phosphooxy)-L-threonine + 2-oxoglutarate = (R)-3-hydroxy-2-oxo-4-phosphooxybutanoate + L-glutamate. Its pathway is amino-acid biosynthesis; L-serine biosynthesis; L-serine from 3-phospho-D-glycerate: step 2/3. It participates in cofactor biosynthesis; pyridoxine 5'-phosphate biosynthesis; pyridoxine 5'-phosphate from D-erythrose 4-phosphate: step 3/5. In terms of biological role, catalyzes the reversible conversion of 3-phosphohydroxypyruvate to phosphoserine and of 3-hydroxy-2-oxo-4-phosphonooxybutanoate to phosphohydroxythreonine. The polypeptide is Phosphoserine aminotransferase (Legionella pneumophila (strain Lens)).